Here is a 367-residue protein sequence, read N- to C-terminus: Uroporphyrinogen decarboxylase (367 aa).

Met1 bears the N-acetylmethionine mark. Positions 37, 39, 41, 50, 86, 164, 219, and 339 each coordinate coproporphyrinogen I. 3 residues coordinate coproporphyrinogen III: Arg37, Ala39, and Arg41. Coproporphyrinogen III contacts are provided by Asp86, Tyr164, Ser219, and His339.

This sequence belongs to the uroporphyrinogen decarboxylase family. As to quaternary structure, homodimer.

It is found in the cytoplasm. It localises to the cytosol. The enzyme catalyses uroporphyrinogen III + 4 H(+) = coproporphyrinogen III + 4 CO2. It catalyses the reaction uroporphyrinogen I + 4 H(+) = coproporphyrinogen I + 4 CO2. It functions in the pathway porphyrin-containing compound metabolism; protoporphyrin-IX biosynthesis; coproporphyrinogen-III from 5-aminolevulinate: step 4/4. Its function is as follows. Catalyzes the sequential decarboxylation of the four acetate side chains of uroporphyrinogen to form coproporphyrinogen and participates in the fifth step in the heme biosynthetic pathway. Isomer I or isomer III of uroporphyrinogen may serve as substrate, but only coproporphyrinogen III can ultimately be converted to heme. In vitro also decarboxylates pentacarboxylate porphyrinogen I. This is Uroporphyrinogen decarboxylase from Homo sapiens (Human).